The primary structure comprises 70 residues: Cold shock-like protein CspI (70 aa).

Residues 7–67 (GLVKWFNPEK…GPKGPAAVHV (61 aa)) enclose the CSD domain.

The protein localises to the cytoplasm. In Escherichia coli O6:H1 (strain CFT073 / ATCC 700928 / UPEC), this protein is Cold shock-like protein CspI (cspI).